The chain runs to 434 residues: Zinc finger and BTB domain-containing protein 8A (434 aa).

One can recognise a BTB domain in the interval 24–92 (CDCSILVEGK…VYSGKLSLTG (69 aa)). The tract at residues 134-238 (SLSDKDTGSN…SGNHVSQSEE (105 aa)) is disordered. Residues Ser-161 and Ser-167 each carry the phosphoserine modification. Glycyl lysine isopeptide (Lys-Gly) (interchain with G-Cter in SUMO2) cross-links involve residues Lys-172, Lys-176, and Lys-193. The segment covering 192–202 (AKHEQRKEPSK) has biased composition (basic and acidic residues). The segment covering 226 to 238 (QTDSGNHVSQSEE) has biased composition (polar residues). 2 C2H2-type zinc fingers span residues 275–297 (FKCP…LRCH) and 303–326 (YPCQ…RTIH). Residue Lys-430 forms a Glycyl lysine isopeptide (Lys-Gly) (interchain with G-Cter in SUMO2) linkage.

Its subcellular location is the nucleus. In terms of biological role, may be involved in transcriptional regulation. This chain is Zinc finger and BTB domain-containing protein 8A (Zbtb8a), found in Mus musculus (Mouse).